The primary structure comprises 280 residues: MPNLSGLKTEISSVRNISKITNAMQLVASAKLRKISKKVIDTHNYVSEVYSLFNDIIRQTDKSVFLKESNFKANKTLWVVINSNLGLCGGYNSNVNKLVLQNLKLEDEIFAIGSKAVSFFRSKKIKIKNQITDIDINFTNKKARSISNDLLDMYINHEFDEIKIVYTKFINNVTFEPAIIRIFPIIKLENNFKHSQSLVFEPDAEQILSSTILIYINAIIYGTIIESQVSEQASRRTAMENATNNGKNLEQTLSLKYNRQRQGAITQEISEIVSGANNKS.

This sequence belongs to the ATPase gamma chain family. As to quaternary structure, F-type ATPases have 2 components, CF(1) - the catalytic core - and CF(0) - the membrane proton channel. CF(1) has five subunits: alpha(3), beta(3), gamma(1), delta(1), epsilon(1). CF(0) has three main subunits: a, b and c.

The protein resides in the cell membrane. Functionally, produces ATP from ADP in the presence of a proton gradient across the membrane. The gamma chain is believed to be important in regulating ATPase activity and the flow of protons through the CF(0) complex. This chain is ATP synthase gamma chain, found in Mycoplasma capricolum subsp. capricolum (strain California kid / ATCC 27343 / NCTC 10154).